We begin with the raw amino-acid sequence, 807 residues long: Dual specificity protein phosphatase PPS1 (807 aa).

One can recognise a Tyrosine-protein phosphatase domain in the interval 585–783; it reads LPSRILRHLY…LFKWWKKHYN (199 aa). Residues 593–807 form a catalytic region; it reads LYLGSLDHAQ…GIAEVNMKYT (215 aa). Catalysis depends on cysteine 725, which acts as the Phosphocysteine intermediate.

This sequence belongs to the protein-tyrosine phosphatase family. Non-receptor class dual specificity subfamily.

It catalyses the reaction O-phospho-L-tyrosyl-[protein] + H2O = L-tyrosyl-[protein] + phosphate. It carries out the reaction O-phospho-L-seryl-[protein] + H2O = L-seryl-[protein] + phosphate. The enzyme catalyses O-phospho-L-threonyl-[protein] + H2O = L-threonyl-[protein] + phosphate. Functionally, protein phosphatase with specificity for serine, threonine, and tyrosine residues; has a role in the DNA synthesis phase of the cell cycle. This Saccharomyces cerevisiae (strain ATCC 204508 / S288c) (Baker's yeast) protein is Dual specificity protein phosphatase PPS1 (PPS1).